A 350-amino-acid chain; its full sequence is Small ribosomal subunit biogenesis GTPase RsgA (350 aa).

The span at 1-17 shows a compositional bias: polar residues; the sequence is MSKNKLSKGQQRRVNAN. The segment at 1–33 is disordered; sequence MSKNKLSKGQQRRVNANHQRRLKTSKEKPDYDD. Positions 104-273 constitute a CP-type G domain; the sequence is TSVLTRPDFY…VIDSPGVREF (170 aa). Residues 160-163 and 214-222 each bind GTP; these read NKID and GQSGVGKSS. Residues cysteine 297, cysteine 302, histidine 304, and cysteine 310 each contribute to the Zn(2+) site.

The protein belongs to the TRAFAC class YlqF/YawG GTPase family. RsgA subfamily. In terms of assembly, monomer. Associates with 30S ribosomal subunit, binds 16S rRNA. Requires Zn(2+) as cofactor.

Its subcellular location is the cytoplasm. Functionally, one of several proteins that assist in the late maturation steps of the functional core of the 30S ribosomal subunit. Helps release RbfA from mature subunits. May play a role in the assembly of ribosomal proteins into the subunit. Circularly permuted GTPase that catalyzes slow GTP hydrolysis, GTPase activity is stimulated by the 30S ribosomal subunit. This is Small ribosomal subunit biogenesis GTPase RsgA from Shigella boydii serotype 18 (strain CDC 3083-94 / BS512).